Consider the following 2315-residue polypeptide: Receptor-type tyrosine-protein phosphatase zeta (2315 aa).

Positions 1-24 are cleaved as a signal peptide; it reads MRILKRFLACIQLLCVCRLDWANG. At 25–1636 the chain is on the extracellular side; it reads YYRQQRKLVE…LAEGLESEKK (1612 aa). The Alpha-carbonic anhydrase domain maps to 36 to 300; the sequence is IGWSYTGALN…KFSRQVFSSY (265 aa). 2 disulfide bridges follow: C56-C240 and C133-C264. 6 N-linked (GlcNAc...) asparagine glycosylation sites follow: N105, N134, N223, N232, N324, and N381. The 100-residue stretch at 314–413 folds into the Fibronectin type-III domain; sequence EPENVQADPE…LIVDMPTDNP (100 aa). Disordered stretches follow at residues 442–462 and 477–507; these read IVNP…PQIS and AKTN…SQPV. Positions 496-507 are enriched in polar residues; sequence PNTSLNSTSQPV. N-linked (GlcNAc...) asparagine glycosylation is found at N497, N501, and N552. A glycan (O-linked (Xyl...) (chondroitin sulfate) serine) is linked at S587. N602 and N629 each carry an N-linked (GlcNAc...) asparagine glycan. The tract at residues 628–650 is disordered; sequence RNASEDSTSSGSEESLKDPSMEG. Phosphoserine; alternate is present on S637. Residue S637 is glycosylated (O-linked (Xyl...) (chondroitin sulfate) serine; alternate). S639 carries the post-translational modification Phosphoserine. N677 is a glycosylation site (N-linked (GlcNAc...) asparagine). S997 carries an O-linked (Xyl...) (chondroitin sulfate) serine glycan. Residues N1017, N1050, N1082, and N1122 are each glycosylated (N-linked (GlcNAc...) asparagine). The span at 1123–1138 shows a compositional bias: polar residues; that stretch reads FSVQPTHTVSQASGDT. Disordered regions lie at residues 1123 to 1160, 1397 to 1523, 1543 to 1572, and 1584 to 1621; these read FSVQ…SSEM, KATS…EEND, LTSD…SFAD, and AGDS…NSSH. Low complexity predominate over residues 1145-1159; it reads SANSEPASSDPASSE. Residues 1417-1432 are compositionally biased toward acidic residues; it reads EDGDTDDDGDDDDDDR. A compositionally biased stretch (basic and acidic residues) spans 1450-1465; sequence ESQEKVMNDSDTHENS. N1457 is a glycosylation site (N-linked (GlcNAc...) asparagine). 2 stretches are compositionally biased toward polar residues: residues 1466-1479 and 1487-1513; these read LMDQ…SLSE and VTSV…GLSQ. 2 O-linked (Xyl...) (chondroitin sulfate) serine glycosylation sites follow: S1549 and S1551. Polar residues-rich tracts occupy residues 1554-1572 and 1593-1606; these read GTSD…SFAD and FPQS…SENS. A glycan (N-linked (GlcNAc...) asparagine) is linked at N1562. Residue N1618 is glycosylated (N-linked (GlcNAc...) asparagine). A helical transmembrane segment spans residues 1637-1662; it reads AVIPLVIVSALTFICLVVLVGILIYW. Residues 1663-2315 are Cytoplasmic-facing; that stretch reads RKCFQTAHFY…NIAESLESLV (653 aa). 2 positions are modified to phosphothreonine: T1684 and T1687. Tyrosine-protein phosphatase domains follow at residues 1717-1992 and 2023-2282; these read FTEE…LVEA and LEKQ…ILSL. Substrate-binding positions include D1901, 1933–1939, and Q1977; that span reads CSAGVGR. C1933 (phosphocysteine intermediate) is an active-site residue. At S2055 the chain carries Phosphoserine.

This sequence belongs to the protein-tyrosine phosphatase family. Receptor class 5 subfamily. The carbonic-anhydrase like domain interacts with CNTN1 (contactin). Interacts with PTN. Interaction with PTN promotes formation of homooligomers; oligomerization impairs phosphatase activity. Interacts (via chondroitin sulfate chains) with MDK (via C-terminal); this interaction is inhibited by PTN; this interaction promotes neuronal migration. Specifically expressed in the central nervous system, where it is localized in the Purkinje cell layer of the cerebellum, the dentate gyrus, and the subependymal layer of the anterior horn of the lateral ventricle. Developmentally regulated in the brain.

The protein localises to the cell membrane. Its subcellular location is the secreted. It carries out the reaction O-phospho-L-tyrosyl-[protein] + H2O = L-tyrosyl-[protein] + phosphate. Its function is as follows. Protein tyrosine phosphatase that negatively regulates oligodendrocyte precursor proliferation in the embryonic spinal cord. Required for normal differentiation of the precursor cells into mature, fully myelinating oligodendrocytes. May play a role in protecting oligondendrocytes against apoptosis. May play a role in the establishment of contextual memory, probably via the dephosphorylation of proteins that are part of important signaling cascades. The protein is Receptor-type tyrosine-protein phosphatase zeta (PTPRZ1) of Homo sapiens (Human).